The following is a 146-amino-acid chain: Ribonuclease H (146 aa).

The region spanning 1–143 (MKKQVTIYTD…CDQLAREAIK (143 aa)) is the RNase H type-1 domain. Mg(2+) is bound by residues Asp-10, Glu-48, Asp-70, and Asp-135.

This sequence belongs to the RNase H family. Monomer. Mg(2+) is required as a cofactor.

Its subcellular location is the cytoplasm. It carries out the reaction Endonucleolytic cleavage to 5'-phosphomonoester.. Its function is as follows. Endonuclease that specifically degrades the RNA of RNA-DNA hybrids. The chain is Ribonuclease H from Chlorobium chlorochromatii (strain CaD3).